The following is a 410-amino-acid chain: Arginine deiminase (410 aa).

Cys398 serves as the catalytic Amidino-cysteine intermediate.

Belongs to the arginine deiminase family. Homodimer.

The protein localises to the cytoplasm. The catalysed reaction is L-arginine + H2O = L-citrulline + NH4(+). It functions in the pathway amino-acid degradation; L-arginine degradation via ADI pathway; carbamoyl phosphate from L-arginine: step 1/2. In Mycoplasmopsis arginini (Mycoplasma arginini), this protein is Arginine deiminase (arcA).